A 359-amino-acid polypeptide reads, in one-letter code: DNA replication and repair protein RecF (359 aa).

Residue 30-37 (GPNGSGKT) participates in ATP binding.

Belongs to the RecF family.

It is found in the cytoplasm. Functionally, the RecF protein is involved in DNA metabolism; it is required for DNA replication and normal SOS inducibility. RecF binds preferentially to single-stranded, linear DNA. It also seems to bind ATP. The sequence is that of DNA replication and repair protein RecF from Vibrio vulnificus (strain CMCP6).